The chain runs to 200 residues: Holliday junction resolvase RecU (200 aa).

Mg(2+) is bound by residues Thr-82, Asp-84, Glu-97, and Gln-116.

This sequence belongs to the RecU family. It depends on Mg(2+) as a cofactor.

The protein resides in the cytoplasm. It carries out the reaction Endonucleolytic cleavage at a junction such as a reciprocal single-stranded crossover between two homologous DNA duplexes (Holliday junction).. In terms of biological role, endonuclease that resolves Holliday junction intermediates in genetic recombination. Cleaves mobile four-strand junctions by introducing symmetrical nicks in paired strands. Promotes annealing of linear ssDNA with homologous dsDNA. Required for DNA repair, homologous recombination and chromosome segregation. The protein is Holliday junction resolvase RecU of Streptococcus gordonii (strain Challis / ATCC 35105 / BCRC 15272 / CH1 / DL1 / V288).